Here is a 109-residue protein sequence, read N- to C-terminus: Oncomodulin (109 aa).

An N-acetylserine modification is found at Ser2. 2 consecutive EF-hand domains span residues 39–74 and 78–109; these read MSAS…FQSD and LTES…MVHS. The Ca(2+) site is built by Asp52, Asp54, Ser56, Tyr58, Glu63, Asp91, Asp93, Asp95, Lys97, and Glu102.

Belongs to the parvalbumin family. Found in tumor tissues and not detected in normal tissues.

In terms of biological role, has some calmodulin-like activity with respect to enzyme activation and growth regulation. Binds two calcium ions. The chain is Oncomodulin (Ocm) from Rattus norvegicus (Rat).